A 504-amino-acid chain; its full sequence is Transcription factor NDT80 (504 aa).

3 disordered regions span residues methionine 64–methionine 172, asparagine 283–alanine 310, and arginine 477–glutamine 504. Low complexity-rich tracts occupy residues glutamine 73–glutamine 87, glutamine 103–proline 145, glutamine 153–methionine 172, and histidine 292–proline 301. The segment at residues glutamine 160–arginine 488 is a DNA-binding region (NDT80).

It localises to the nucleus. Its function is as follows. Meiosis-specific transcription factor that binds to the middle sporulation element (MSE) of targeted genes corresponding to the consensus sequence 5'-ACACAAA-3'. Acts as an activator of CDR1 induction by antifungal drugs. Modulates azole sensitivity by controlling the expression of ergosterol biosynthesis genes. Required for hyphal growth in response to different filament-inducing cues and for the proper expression of genes characterizing the filamentous transcriptional program including noteworthy genes encoding cell wall components, such as HWP1, ECE1, RBT4, and ALS3. Is essential for the completion of cell separation through the direct transcriptional regulation of genes encoding the chitinase CHT3 and the cell wall glucosidase SUN41. Required for biofilm formation and plays a key role in microcolony formation under both flow and static conditions and to epithelial surfaces. Essential for virulence. The chain is Transcription factor NDT80 from Candida albicans (strain SC5314 / ATCC MYA-2876) (Yeast).